Reading from the N-terminus, the 243-residue chain is tRNA (guanine-N(7)-)-methyltransferase (243 aa).

E74, E99, D126, and D149 together coordinate S-adenosyl-L-methionine. D149 is a catalytic residue. Substrate is bound by residues K153, D185, and T221–E224.

Belongs to the class I-like SAM-binding methyltransferase superfamily. TrmB family.

It carries out the reaction guanosine(46) in tRNA + S-adenosyl-L-methionine = N(7)-methylguanosine(46) in tRNA + S-adenosyl-L-homocysteine. The protein operates within tRNA modification; N(7)-methylguanine-tRNA biosynthesis. Catalyzes the formation of N(7)-methylguanine at position 46 (m7G46) in tRNA. The polypeptide is tRNA (guanine-N(7)-)-methyltransferase (Psychromonas ingrahamii (strain DSM 17664 / CCUG 51855 / 37)).